Reading from the N-terminus, the 194-residue chain is Imidazoleglycerol-phosphate dehydratase (194 aa).

This sequence belongs to the imidazoleglycerol-phosphate dehydratase family.

Its subcellular location is the cytoplasm. It carries out the reaction D-erythro-1-(imidazol-4-yl)glycerol 3-phosphate = 3-(imidazol-4-yl)-2-oxopropyl phosphate + H2O. It functions in the pathway amino-acid biosynthesis; L-histidine biosynthesis; L-histidine from 5-phospho-alpha-D-ribose 1-diphosphate: step 6/9. In Thermoanaerobacter pseudethanolicus (strain ATCC 33223 / 39E) (Clostridium thermohydrosulfuricum), this protein is Imidazoleglycerol-phosphate dehydratase.